We begin with the raw amino-acid sequence, 356 residues long: tRNA N6-adenosine threonylcarbamoyltransferase (356 aa).

Residues His114 and His118 each contribute to the Fe cation site. Substrate is bound by residues 136–140 (LVSGG), Asp169, Gly182, and Asn280. Asp308 is a binding site for Fe cation. The segment at 333-356 (ARPRWPLDNSQPALLGSGKKGAKA) is disordered.

Belongs to the KAE1 / TsaD family. Requires Fe(2+) as cofactor.

The protein localises to the cytoplasm. It catalyses the reaction L-threonylcarbamoyladenylate + adenosine(37) in tRNA = N(6)-L-threonylcarbamoyladenosine(37) in tRNA + AMP + H(+). Functionally, required for the formation of a threonylcarbamoyl group on adenosine at position 37 (t(6)A37) in tRNAs that read codons beginning with adenine. Is involved in the transfer of the threonylcarbamoyl moiety of threonylcarbamoyl-AMP (TC-AMP) to the N6 group of A37, together with TsaE and TsaB. TsaD likely plays a direct catalytic role in this reaction. The protein is tRNA N6-adenosine threonylcarbamoyltransferase of Dinoroseobacter shibae (strain DSM 16493 / NCIMB 14021 / DFL 12).